We begin with the raw amino-acid sequence, 574 residues long: Adenine deaminase (574 aa).

Belongs to the metallo-dependent hydrolases superfamily. Adenine deaminase family. Mn(2+) serves as cofactor.

It carries out the reaction adenine + H2O + H(+) = hypoxanthine + NH4(+). The polypeptide is Adenine deaminase (Thermosipho africanus (strain TCF52B)).